Consider the following 86-residue polypeptide: Large ribosomal subunit protein bL27 (86 aa).

The tract at residues 1–26 (MATKKAGGSSRNGRDSAGRRLGVKKS) is disordered.

This sequence belongs to the bacterial ribosomal protein bL27 family.

The chain is Large ribosomal subunit protein bL27 from Rickettsia akari (strain Hartford).